The chain runs to 527 residues: Catalase (527 aa).

A compositionally biased stretch (basic and acidic residues) spans 1–22 (MADSRDPASDQMKHWKEERAAQ). Residues 1-32 (MADSRDPASDQMKHWKEERAAQKPDVLTTAGG) are disordered. A2 carries the N-acetylalanine modification. Residue S9 is modified to Phosphoserine. K13 is modified (N6-succinyllysine). Residues H75 and N148 contribute to the active site. Positions 194, 201, 203, and 213 each coordinate NADP(+). K221 bears the N6-succinyllysine mark. K233 carries the N6-acetyllysine modification. 4 residues coordinate NADP(+): K237, W303, H305, and K306. Residue K306 is modified to N6-acetyllysine; alternate. An N6-succinyllysine; alternate modification is found at K306. Y358 is a heme binding site. A Phosphoserine modification is found at S434. K480 is subject to N6-acetyllysine; alternate. K480 bears the N6-succinyllysine; alternate mark. Position 499 is an N6-acetyllysine (K499). T511 is modified (phosphothreonine). S517 is subject to Phosphoserine. K522 carries the N6-succinyllysine modification. The Microbody targeting signal; atypical signature appears at 524–527 (KANL).

The protein belongs to the catalase family. Homotetramer. Interacts (via microbody targeting signal) with PEX5, monomeric form interacts with PEX5, leading to its translocation into peroxisomes. Heme is required as a cofactor. Requires NADP(+) as cofactor.

The protein localises to the peroxisome matrix. It carries out the reaction 2 H2O2 = O2 + 2 H2O. Functionally, catalyzes the degradation of hydrogen peroxide (H(2)O(2)) generated by peroxisomal oxidases to water and oxygen, thereby protecting cells from the toxic effects of hydrogen peroxide. Promotes growth of cells including T-cells, B-cells, myeloid leukemia cells, melanoma cells, mastocytoma cells and normal and transformed fibroblast cells. In Cavia porcellus (Guinea pig), this protein is Catalase (CAT).